Here is a 389-residue protein sequence, read N- to C-terminus: E3 ubiquitin-protein ligase E3D (389 aa).

Ala-2 is modified (N-acetylalanine). The BRAT1-like motif motif lies at 129-159; it reads PLPSENWGALVGEWCCHPDPFANKSLHPQEN. Cys-144 serves as a coordination point for Zn(2+). The interval 235 to 257 is interaction with UBE2C; the sequence is QSSERSFPIIPRSWFVQSVIAQC. The segment at 353–389 is HECT-like; it reads LPSATCLELLLILSKSNANLPSSLRRVNSFQVAFLKM.

As to quaternary structure, interacts with UBE2C/UbcH10 (E2 ubiquitin-conjugating enzyme). In vitro, interacts with cyclin-B. Post-translationally, ubiquitinated by UBCH10 (E2 ubiquitin-conjugating enzyme).

It localises to the cytoplasm. The enzyme catalyses S-ubiquitinyl-[E2 ubiquitin-conjugating enzyme]-L-cysteine + [acceptor protein]-L-lysine = [E2 ubiquitin-conjugating enzyme]-L-cysteine + N(6)-ubiquitinyl-[acceptor protein]-L-lysine.. Its pathway is protein modification; protein ubiquitination. Functionally, E3 ubiquitin-protein ligase which accepts ubiquitin from specific E2 ubiquitin-conjugating enzymes, and transfers it to substrates, generally promoting their degradation by the proteasome. Independently of its E3 ubiquitin-protein ligase activity, acts as an inhibitor of CPSF3 endonuclease activity by blocking CPSF3 active site. The sequence is that of E3 ubiquitin-protein ligase E3D (UBE3D) from Homo sapiens (Human).